A 423-amino-acid chain; its full sequence is MKAELIAVGTEILTGQIVNTNAQFLSEKMAELGIDVYFQTAVGDNEERLLSVITTASQRSDLVILCGGLGPTKDDLTKQTLAKYLRKDLVYDEQACQKLDDFFAKRKPSSRTPNNERQAQVIEGSIPLPNKTGLAVGGFITVDGISYVVLPGPPSELKSMVNEELVPLLSKQYSTLYSKVLRFFGVGESQLVTVLSDFIENQTDPTIAPYAKTGEVTLRLSTKTENQALADKKLGQLEAQLLSRKTLEGQPLADVFYGYGEDNSLARETFELLVKYDKTITAAESLTAGLFQSTLASFPGASQVFNGGFVAYSMEEKAKMLGLPLEELKSHGVVSAYTAEGMAEQARLLTGADIGVSLTGVAGPDMLEEQPAGTVFIGLATQNKVESIKVLISGRSRLDVRYIATLHAFNMVRKTLLKLENLL.

It belongs to the CinA family.

The polypeptide is Putative competence-damage inducible protein (Streptococcus pyogenes serotype M12 (strain MGAS2096)).